We begin with the raw amino-acid sequence, 729 residues long: Fatty acid oxidation complex subunit alpha (729 aa).

Residues 1–189 (MLYQGETLQL…KVGLVDAVVA (189 aa)) form an enoyl-CoA hydratase/isomerase region. Substrate is bound at residue Asp-296. The interval 311-729 (EAPKQAAVLG…LSDVSTGQPA (419 aa)) is 3-hydroxyacyl-CoA dehydrogenase. NAD(+)-binding positions include Met-324, Asp-343, 400 to 402 (VVE), Lys-407, and Ser-429. The active-site For 3-hydroxyacyl-CoA dehydrogenase activity is the His-450. Residue Asn-453 coordinates NAD(+). Substrate-binding residues include Asn-500 and Tyr-660.

The protein in the N-terminal section; belongs to the enoyl-CoA hydratase/isomerase family. It in the C-terminal section; belongs to the 3-hydroxyacyl-CoA dehydrogenase family. In terms of assembly, heterotetramer of two alpha chains (FadB) and two beta chains (FadA).

The enzyme catalyses a (3S)-3-hydroxyacyl-CoA + NAD(+) = a 3-oxoacyl-CoA + NADH + H(+). It carries out the reaction a (3S)-3-hydroxyacyl-CoA = a (2E)-enoyl-CoA + H2O. The catalysed reaction is a 4-saturated-(3S)-3-hydroxyacyl-CoA = a (3E)-enoyl-CoA + H2O. It catalyses the reaction (3S)-3-hydroxybutanoyl-CoA = (3R)-3-hydroxybutanoyl-CoA. The enzyme catalyses a (3Z)-enoyl-CoA = a 4-saturated (2E)-enoyl-CoA. It carries out the reaction a (3E)-enoyl-CoA = a 4-saturated (2E)-enoyl-CoA. It participates in lipid metabolism; fatty acid beta-oxidation. Its function is as follows. Involved in the aerobic and anaerobic degradation of long-chain fatty acids via beta-oxidation cycle. Catalyzes the formation of 3-oxoacyl-CoA from enoyl-CoA via L-3-hydroxyacyl-CoA. It can also use D-3-hydroxyacyl-CoA and cis-3-enoyl-CoA as substrate. The protein is Fatty acid oxidation complex subunit alpha of Serratia proteamaculans (strain 568).